Here is a 222-residue protein sequence, read N- to C-terminus: Pro-opiomelanocortin-1 (222 aa).

An N-terminal signal peptide occupies residues 1-28 (MVRGERMLCPAWLLALAVLCAAGSEVRA). A propeptide spanning residues 29-105 (QCMEDARCRD…DPESSPQHEH (77 aa)) is cleaved from the precursor.

Belongs to the POMC family. Specific enzymatic cleavages at paired basic residues yield the different active peptides.

It localises to the secreted. In terms of biological role, stimulates the adrenal glands to release cortisol. Functionally, anorexigenic peptide. Increases the pigmentation of skin by increasing melanin production in melanocytes. Its function is as follows. Increases the pigmentation of skin by increasing melanin production in melanocytes. Endogenous orexigenic opiate. In terms of biological role, endogenous opiate. This chain is Pro-opiomelanocortin-1 (pomca), found in Cyprinus carpio (Common carp).